A 1042-amino-acid chain; its full sequence is MADDSNSAYPRVDYGAGTGAAFPDLERRVLEAWAADDTFRASIENRSGAAEFVFYDGPPFANGLPHYGHLLTGYVKDVIPRFQTMRGKRVDRRFGWDCHGLPAEIEAEKQLGITDKSQIDAMGLAEFNAACKSSVLRYTGEWRDYVTRQARWVDFDNDYKTLDLDFMESVMWAFKSLYDKGLIYQGFRVLPYSWYEQTPLSNQETRLDDAYKMRQDPAVTVDMVLSVPGEHPLRELDGANALIWTTTPWTLPSNLAIAVHPDVRYVHLRAADGTRYVLAAERVSHYSREFGEDATVLAEFEGAALVGLSYRPPFDFFLGHPNAHRVLAADYVTTDSGTGVVHMAPAFGEEDMEVCSANDIELVQPLDPGGRFTSMVPPYEGLMVFDANPVIIKDLKAAGKLLRHETIEHSYPHSWRSGQPLIYMAVPSWFVAVTKFRDRMVELNKQITWVPEHIRDGQFGKWLEGARDWNISRNRYWGSPIPVWVSDDPAYPRVDVYGSLEELERDFGVRPTDLHRPAIDQLTRPNPDDPTGRSMMRRVPEVLDCWFESGSMPYAQVHYPFENKEWFDSHFPGDFIVEYNGQTRGWFYTLHVLATALFDSPAFKTVAAHGIVLGDDGLKMSKSKGNYPDVNEVFDRDGSDAMRWFLMSSPILRGGNLIVTERGIREGVSHALRPLWNAWTFLQLYASKPGEWRTDSTHVLDRYILAKLAQTRDGMTEALEVYDIAGACEELRTFADALTNWYVRRSRSRFWSEDRDAVDTLHTVLEVATRLAAPLLPLISEVIWRGLTGGRSVHLADWPAAADLPADPELVSTMDEVRTVCSTVLSLRKAKNLRVRLPLAEVTIAAPDAERLAPYADIVADEVNVKKVDLTTDVAVHGRFELAVNARAAGPRLGKDVQRVIKAVKAGDWTESADGVVSAAGITLLPEEYTQRLVAAEPESTAALPGNAGLVVLDSVVTEELEAEGWARDLVRELQETRKSLGLDVSDRIHVVLEVPEARRSWAQTHRDLIAGEILATSLEFGTAGEPAAELAGGVRASVRKA.

Positions 59 to 69 (PFANGLPHYGH) match the 'HIGH' region motif. Residues 619–623 (KMSKS) carry the 'KMSKS' region motif. K622 contacts ATP.

The protein belongs to the class-I aminoacyl-tRNA synthetase family. IleS type 2 subfamily. As to quaternary structure, monomer. It depends on Zn(2+) as a cofactor.

Its subcellular location is the cytoplasm. The catalysed reaction is tRNA(Ile) + L-isoleucine + ATP = L-isoleucyl-tRNA(Ile) + AMP + diphosphate. Its function is as follows. Catalyzes the attachment of isoleucine to tRNA(Ile). As IleRS can inadvertently accommodate and process structurally similar amino acids such as valine, to avoid such errors it has two additional distinct tRNA(Ile)-dependent editing activities. One activity is designated as 'pretransfer' editing and involves the hydrolysis of activated Val-AMP. The other activity is designated 'posttransfer' editing and involves deacylation of mischarged Val-tRNA(Ile). The sequence is that of Isoleucine--tRNA ligase from Nocardia farcinica (strain IFM 10152).